A 186-amino-acid chain; its full sequence is Ribosome-recycling factor (186 aa).

Belongs to the RRF family.

Its subcellular location is the cytoplasm. Responsible for the release of ribosomes from messenger RNA at the termination of protein biosynthesis. May increase the efficiency of translation by recycling ribosomes from one round of translation to another. This Rhodopseudomonas palustris (strain ATCC BAA-98 / CGA009) protein is Ribosome-recycling factor.